A 227-amino-acid chain; its full sequence is Ubiquitin domain-containing protein 1 (227 aa).

The disordered stretch occupies residues 1 to 35; that stretch reads MGNCVGRQRRERPAAPGHPRKRAGRNEPLKKERLK. Residues 24–35 are compositionally biased toward basic and acidic residues; the sequence is GRNEPLKKERLK. The 76-residue stretch at 149 to 224 folds into the Ubiquitin-like domain; the sequence is FPLKVRLSTG…IQVIINQPPP (76 aa).

Interacts with UBTD1.

In terms of biological role, may be involved in the regulation of cellular senescence through a positive feedback loop with TP53. Is a TP53 downstream target gene that increases the stability of TP53 protein by promoting the ubiquitination and degradation of MDM2. This is Ubiquitin domain-containing protein 1 (Ubtd1) from Rattus norvegicus (Rat).